The sequence spans 426 residues: Cytochrome c biogenesis protein Ccs1 (426 aa).

The next 3 membrane-spanning stretches (helical) occupy residues 11-31, 70-90, and 153-173; these read LKFA…GSII, NFWF…CTFF, and IAPV…IFAS.

It belongs to the Ccs1/CcsB family. As to quaternary structure, may interact with CcsA.

The protein localises to the plastid. Its subcellular location is the chloroplast thylakoid membrane. In terms of biological role, required during biogenesis of c-type cytochromes (cytochrome c6 and cytochrome f) at the step of heme attachment. The sequence is that of Cytochrome c biogenesis protein Ccs1 from Heterosigma akashiwo (strain CCMP452 / OLISTH).